A 431-amino-acid chain; its full sequence is Tol-Pal system protein TolB (431 aa).

Residues 1 to 26 (MSLMTKLGFRALVASCLIAAGGAANA) form the signal peptide. The interval 411–431 (PQILSVQGGSVREPSWGPFMQ) is disordered.

Belongs to the TolB family. In terms of assembly, the Tol-Pal system is composed of five core proteins: the inner membrane proteins TolA, TolQ and TolR, the periplasmic protein TolB and the outer membrane protein Pal. They form a network linking the inner and outer membranes and the peptidoglycan layer.

The protein resides in the periplasm. In terms of biological role, part of the Tol-Pal system, which plays a role in outer membrane invagination during cell division and is important for maintaining outer membrane integrity. This chain is Tol-Pal system protein TolB, found in Burkholderia vietnamiensis (strain G4 / LMG 22486) (Burkholderia cepacia (strain R1808)).